The chain runs to 251 residues: Prolactin-7B1 (251 aa).

The signal sequence occupies residues 1-29 (MNTSLTQLCFWALQILLMSNLLLWEDVVS). Residues Asn-2 and Asn-73 are each glycosylated (N-linked (GlcNAc...) asparagine). 2 disulfide bridges follow: Cys-100/Cys-216 and Cys-233/Cys-241.

It belongs to the somatotropin/prolactin family. Expression restricted to placenta. Abundantly expressed in trophoblast cells of the junctional zone and trophoblasts migrating into the mesometrial decidua.

Its subcellular location is the secreted. This is Prolactin-7B1 (Prl7b1) from Mus musculus (Mouse).